Here is a 146-residue protein sequence, read N- to C-terminus: 3-dehydroquinate dehydratase (146 aa).

The active-site Proton acceptor is the Tyr-23. Asn-75, His-81, and Asp-88 together coordinate substrate. The Proton donor role is filled by His-101. Residues 102–103 and Arg-112 each bind substrate; that span reads LS.

Belongs to the type-II 3-dehydroquinase family. In terms of assembly, homododecamer.

The catalysed reaction is 3-dehydroquinate = 3-dehydroshikimate + H2O. The protein operates within metabolic intermediate biosynthesis; chorismate biosynthesis; chorismate from D-erythrose 4-phosphate and phosphoenolpyruvate: step 3/7. Functionally, catalyzes a trans-dehydration via an enolate intermediate. The sequence is that of 3-dehydroquinate dehydratase from Saccharophagus degradans (strain 2-40 / ATCC 43961 / DSM 17024).